The following is a 260-amino-acid chain: Proteasome subunit alpha (260 aa).

This sequence belongs to the peptidase T1A family. The 20S proteasome core is composed of 14 alpha and 14 beta subunits that assemble into four stacked heptameric rings, resulting in a barrel-shaped structure. The two inner rings, each composed of seven catalytic beta subunits, are sandwiched by two outer rings, each composed of seven alpha subunits. The catalytic chamber with the active sites is on the inside of the barrel. Has a gated structure, the ends of the cylinder being occluded by the N-termini of the alpha-subunits. Is capped at one or both ends by the proteasome regulatory ATPase, PAN.

Its subcellular location is the cytoplasm. With respect to regulation, the formation of the proteasomal ATPase PAN-20S proteasome complex, via the docking of the C-termini of PAN into the intersubunit pockets in the alpha-rings, triggers opening of the gate for substrate entry. Interconversion between the open-gate and close-gate conformations leads to a dynamic regulation of the 20S proteasome proteolysis activity. Functionally, component of the proteasome core, a large protease complex with broad specificity involved in protein degradation. This is Proteasome subunit alpha from Pyrococcus abyssi (strain GE5 / Orsay).